The following is a 121-amino-acid chain: Basic phospholipase A2 daboxin P (121 aa).

Intrachain disulfides connect Cys-26–Cys-115, Cys-28–Cys-44, Cys-43–Cys-95, Cys-49–Cys-121, Cys-50–Cys-88, Cys-57–Cys-81, and Cys-75–Cys-86. Ca(2+) contacts are provided by Tyr-27, Gly-29, and Gly-31. Residue His-47 is part of the active site. Asp-48 contacts Ca(2+). Asp-89 is a catalytic residue.

Requires Ca(2+) as cofactor. As to expression, expressed by the venom gland.

Its subcellular location is the secreted. It catalyses the reaction a 1,2-diacyl-sn-glycero-3-phosphocholine + H2O = a 1-acyl-sn-glycero-3-phosphocholine + a fatty acid + H(+). Snake venom phospholipase A2 (PLA2) that exhibits anticoagulant activity, probably by binding to factor X and its activated form factor Xa (F10). Shows no cytotoxicity. PLA2 catalyzes the calcium-dependent hydrolysis of the 2-acyl groups in 3-sn-phosphoglycerides. The protein is Basic phospholipase A2 daboxin P of Daboia russelii (Russel's viper).